A 23-amino-acid chain; its full sequence is Potassium channel toxin alpha-KTx 13.3 (23 aa).

3 disulfides stabilise this stretch: C2–C15, C5–C20, and C9–C22. The segment at 13–20 (GKCINGRC) is interaction with Ca(2+)-activated K(+) channels. The residue at position 23 (Y23) is a Tyrosine amide.

As to expression, expressed by the venom gland.

The protein resides in the secreted. In terms of biological role, reversibly blocks Shaker B potassium channels, with a dissociation constant of 200 nM. The chain is Potassium channel toxin alpha-KTx 13.3 from Tityus pachyurus (Colombian scorpion).